Consider the following 370-residue polypeptide: Cytochrome b (370 aa).

The next 4 membrane-spanning stretches (helical) occupy residues 25-45, 69-90, 105-125, and 170-190; these read FGSM…FLAV, WLMQ…YIHI, WLSG…GYVL, and FFAL…LHVI. Heme b is bound by residues His75 and His89. 2 residues coordinate heme b: His174 and His188. Position 193 (His193) interacts with a ubiquinone. Helical transmembrane passes span 218 to 238, 280 to 300, 312 to 332, and 339 to 358; these read YKDL…VSFS, LGGA…PFTH, FMQM…WTAT, and FTLI…ISNP.

This sequence belongs to the cytochrome b family. In terms of assembly, the cytochrome bc1 complex contains 3 respiratory subunits (MT-CYB, CYC1 and UQCRFS1), 2 core proteins (UQCRC1 and UQCRC2) and probably 6 low-molecular weight proteins. It depends on heme b as a cofactor.

Its subcellular location is the mitochondrion inner membrane. Functionally, component of the ubiquinol-cytochrome c reductase complex (complex III or cytochrome b-c1 complex) that is part of the mitochondrial respiratory chain. The b-c1 complex mediates electron transfer from ubiquinol to cytochrome c. Contributes to the generation of a proton gradient across the mitochondrial membrane that is then used for ATP synthesis. This is Cytochrome b (MT-CYB) from Eunectes murinus (Green anaconda).